We begin with the raw amino-acid sequence, 130 residues long: Glycine cleavage system H protein (130 aa).

Residues 28 to 110 form the Lipoyl-binding domain; sequence TVRIGITSVA…FGEGWLFEVE (83 aa). Position 69 is an N6-lipoyllysine (Lys69).

The protein belongs to the GcvH family. The glycine cleavage system is composed of four proteins: P, T, L and H. (R)-lipoate serves as cofactor.

Functionally, the glycine cleavage system catalyzes the degradation of glycine. The H protein shuttles the methylamine group of glycine from the P protein to the T protein. This Corynebacterium aurimucosum (strain ATCC 700975 / DSM 44827 / CIP 107346 / CN-1) (Corynebacterium nigricans) protein is Glycine cleavage system H protein.